We begin with the raw amino-acid sequence, 120 residues long: C-type natriuretic peptide 4 (120 aa).

The N-terminal stretch at 1 to 22 is a signal peptide; it reads MNLSYLVACGLMITLLSVRMGA. Positions 23-96 are excised as a propeptide; sequence KPLSQAQQKS…PRRHKTGIKK (74 aa). Cys-104 and Cys-120 are disulfide-bonded.

The protein belongs to the natriuretic peptide family.

It localises to the secreted. In terms of biological role, exhibits natriuretic and vasodepressant activity. Has cGMP-stimulating activity. May help to regulate body fluid homeostasis in a variety of aquatic environments. This Takifugu rubripes (Japanese pufferfish) protein is C-type natriuretic peptide 4.